The chain runs to 898 residues: Alanine--tRNA ligase (898 aa).

Residues His-584, His-588, Cys-686, and His-690 each coordinate Zn(2+).

It belongs to the class-II aminoacyl-tRNA synthetase family. The cofactor is Zn(2+).

The protein localises to the cytoplasm. The enzyme catalyses tRNA(Ala) + L-alanine + ATP = L-alanyl-tRNA(Ala) + AMP + diphosphate. Its function is as follows. Catalyzes the attachment of alanine to tRNA(Ala) in a two-step reaction: alanine is first activated by ATP to form Ala-AMP and then transferred to the acceptor end of tRNA(Ala). Also edits incorrectly charged Ser-tRNA(Ala) and Gly-tRNA(Ala) via its editing domain. In Myxococcus xanthus (strain DK1622), this protein is Alanine--tRNA ligase.